A 545-amino-acid polypeptide reads, in one-letter code: High-molecular-weight cytochrome c (545 aa).

The N-terminal stretch at 1 to 31 is a signal peptide; it reads MRNGRTLLRWAGVLAATAIIGVGGFWSQGTT. Residues His-66, His-69, Cys-80, Cys-83, His-84, His-111, Cys-114, Cys-117, His-118, Cys-135, Cys-138, His-139, His-159, His-162, Cys-178, Cys-181, His-182, His-183, Cys-202, Cys-205, His-206, His-222, Cys-225, Cys-228, His-229, Cys-244, Cys-247, His-248, His-298, His-301, Cys-308, Cys-311, His-312, His-313, Cys-319, Cys-322, His-323, His-341, Cys-349, Cys-352, His-353, Cys-362, Cys-365, His-366, Cys-378, Cys-381, His-382, His-449, His-470, Cys-477, Cys-480, His-481, His-482, Cys-493, Cys-496, His-497, His-516, Cys-519, Cys-522, His-523, Cys-536, Cys-539, and His-540 each contribute to the heme c site.

Monomer. Binds 16 heme c groups per subunit. High-spin heme 15 has single axial histidine ligand and the other hemes are low-spin bis-histidinyl coordinated.

The protein resides in the periplasm. HMWC (high-molecular-weight cytochrome c), ORF2, ORF3, ORF4, ORF5 and ORF6 in the HMC operon form a transmembrane protein complex that allows electron flow from the periplasmic hydrogenase to the cytoplasmic enzymes that catalyze reduction of sulfates. In Nitratidesulfovibrio vulgaris (strain ATCC 29579 / DSM 644 / CCUG 34227 / NCIMB 8303 / VKM B-1760 / Hildenborough) (Desulfovibrio vulgaris), this protein is High-molecular-weight cytochrome c (hmcA).